The primary structure comprises 118 residues: SPbeta prophage-derived uncharacterized protein YomS (118 aa).

This Bacillus subtilis (strain 168) protein is SPbeta prophage-derived uncharacterized protein YomS (yomS).